The chain runs to 179 residues: Protein HEADING DATE 3A (179 aa).

This sequence belongs to the phosphatidylethanolamine-binding protein family. As to expression, expressed in the inner region of the SAM, stem and leaf blade vascular tissues (at protein level).

Its subcellular location is the cytoplasm. It localises to the nucleus. Functionally, probable mobile flower-promoting signal (florigen) that moves from the leaf to the shoot apical meristem (SAM) and induces flowering. Promotes the transition from vegetative growth to flowering downstream of HD1 and EHD1 under short day (SD) conditions. Acts upstream of MADS14 and MADS15. This is Protein HEADING DATE 3A (HD3A) from Oryza sativa subsp. japonica (Rice).